We begin with the raw amino-acid sequence, 502 residues long: Glycerol kinase (502 aa).

Thr-14 is a binding site for ADP. ATP contacts are provided by Thr-14 and Thr-15. Thr-14 serves as a coordination point for sn-glycerol 3-phosphate. Arg-18 lines the ADP pocket. Sn-glycerol 3-phosphate is bound by residues Arg-84, Glu-85, Tyr-136, and Asp-245. Glycerol-binding residues include Arg-84, Glu-85, Tyr-136, Asp-245, and Gln-246. Positions 267 and 314 each coordinate ADP. ATP-binding residues include Thr-267, Gly-314, Gln-318, and Gly-415. Positions 415 and 419 each coordinate ADP.

Belongs to the FGGY kinase family.

It carries out the reaction glycerol + ATP = sn-glycerol 3-phosphate + ADP + H(+). It functions in the pathway polyol metabolism; glycerol degradation via glycerol kinase pathway; sn-glycerol 3-phosphate from glycerol: step 1/1. With respect to regulation, inhibited by fructose 1,6-bisphosphate (FBP). Its function is as follows. Key enzyme in the regulation of glycerol uptake and metabolism. Catalyzes the phosphorylation of glycerol to yield sn-glycerol 3-phosphate. The sequence is that of Glycerol kinase from Acaryochloris marina (strain MBIC 11017).